The primary structure comprises 120 residues: SFFYSLFKGTYNFIYVTIYSYLVDRTKMFFPFFFYLFLFICLSNLVGIVPFSFTITSHLNITFSLSFLVWWATCLLGFYESGLAFIAIFYVKGIPFVLVPFWALIEVISFIFRSVGLSLR.

4 helical membrane-spanning segments follow: residues 2–22 (FFYS…YSYL), 29–49 (FFPF…VGIV), 59–79 (LNIT…LGFY), and 94–116 (IPFV…RSVG).

This sequence belongs to the ATPase A chain family. In terms of assembly, F-type ATPases have 2 components, CF(1) - the catalytic core - and CF(0) - the membrane proton channel. CF(1) has five subunits: alpha(3), beta(3), gamma(1), delta(1), epsilon(1). CF(0) has three main subunits: a, b and c.

The protein localises to the mitochondrion inner membrane. In terms of biological role, mitochondrial membrane ATP synthase (F(1)F(0) ATP synthase or Complex V) produces ATP from ADP in the presence of a proton gradient across the membrane which is generated by electron transport complexes of the respiratory chain. F-type ATPases consist of two structural domains, F(1) - containing the extramembraneous catalytic core and F(0) - containing the membrane proton channel, linked together by a central stalk and a peripheral stalk. During catalysis, ATP synthesis in the catalytic domain of F(1) is coupled via a rotary mechanism of the central stalk subunits to proton translocation. Key component of the proton channel; it may play a direct role in the translocation of protons across the membrane. This chain is ATP synthase subunit a (ATP6), found in Naegleria fowleri (Brain eating amoeba).